Here is a 444-residue protein sequence, read N- to C-terminus: Na(+)/H(+) antiporter NhaA (444 aa).

11 helical membrane passes run 27–47, 72–92, 108–128, 136–156, 167–187, 190–210, 212–232, 312–332, 349–369, 385–405, and 419–439; these read TTGL…NSPL, IHHW…GLEI, MLPI…YYAI, AGWG…LVLL, FLVA…ALFY, EINM…VSFN, FGIH…LFML, HLPV…GVSI, VMAG…YLAI, VFGV…IAEL, and IGIL…LRFI.

This sequence belongs to the NhaA Na(+)/H(+) (TC 2.A.33) antiporter family.

It localises to the cell inner membrane. The enzyme catalyses Na(+)(in) + 2 H(+)(out) = Na(+)(out) + 2 H(+)(in). In terms of biological role, na(+)/H(+) antiporter that extrudes sodium in exchange for external protons. The protein is Na(+)/H(+) antiporter NhaA of Sulfurimonas denitrificans (strain ATCC 33889 / DSM 1251) (Thiomicrospira denitrificans (strain ATCC 33889 / DSM 1251)).